A 113-amino-acid chain; its full sequence is Outer membrane protein assembly factor BamE (113 aa).

A signal peptide spans 1 to 19 (MRCKTLTAAAAVLLMLTAG). Cys20 is lipidated: N-palmitoyl cysteine. The S-diacylglycerol cysteine moiety is linked to residue Cys20.

Belongs to the BamE family. As to quaternary structure, part of the Bam complex, which is composed of the outer membrane protein BamA, and four lipoproteins BamB, BamC, BamD and BamE.

It localises to the cell outer membrane. Functionally, part of the outer membrane protein assembly complex, which is involved in assembly and insertion of beta-barrel proteins into the outer membrane. This Escherichia coli O6:H1 (strain CFT073 / ATCC 700928 / UPEC) protein is Outer membrane protein assembly factor BamE.